We begin with the raw amino-acid sequence, 233 residues long: tRNA (guanine-N(1)-)-methyltransferase (233 aa).

S-adenosyl-L-methionine contacts are provided by residues glycine 121 and 140-145 (IGDYIL).

The protein belongs to the RNA methyltransferase TrmD family. In terms of assembly, homodimer.

It is found in the cytoplasm. It carries out the reaction guanosine(37) in tRNA + S-adenosyl-L-methionine = N(1)-methylguanosine(37) in tRNA + S-adenosyl-L-homocysteine + H(+). Specifically methylates guanosine-37 in various tRNAs. The polypeptide is tRNA (guanine-N(1)-)-methyltransferase (Endomicrobium trichonymphae).